Reading from the N-terminus, the 218-residue chain is Adenylate kinase (218 aa).

An ATP-binding site is contributed by 10-15 (GAGKGT). The tract at residues 30 to 59 (STGDMLRAAIQAQTPLGLEAKKVMDDGKLV) is NMP. Residues T31, R36, 57-59 (KLV), 85-88 (GFPR), and Q92 each bind AMP. The LID stretch occupies residues 122–159 (GRRVHLASGRTYHVIFNPPKKEGVDDITGEPLIQREDD). ATP-binding positions include R123 and 132–133 (TY). AMP is bound by residues R156 and R167. Residue G203 participates in ATP binding.

Belongs to the adenylate kinase family. As to quaternary structure, monomer.

It localises to the cytoplasm. It catalyses the reaction AMP + ATP = 2 ADP. It functions in the pathway purine metabolism; AMP biosynthesis via salvage pathway; AMP from ADP: step 1/1. In terms of biological role, catalyzes the reversible transfer of the terminal phosphate group between ATP and AMP. Plays an important role in cellular energy homeostasis and in adenine nucleotide metabolism. The polypeptide is Adenylate kinase (Prosthecochloris aestuarii (strain DSM 271 / SK 413)).